A 209-amino-acid chain; its full sequence is Large ribosomal subunit protein uL3 (209 aa).

Position 150 is an N5-methylglutamine (Q150).

The protein belongs to the universal ribosomal protein uL3 family. Part of the 50S ribosomal subunit. Forms a cluster with proteins L14 and L19. In terms of processing, methylated by PrmB.

Its function is as follows. One of the primary rRNA binding proteins, it binds directly near the 3'-end of the 23S rRNA, where it nucleates assembly of the 50S subunit. The protein is Large ribosomal subunit protein uL3 of Escherichia coli O139:H28 (strain E24377A / ETEC).